The chain runs to 236 residues: Purine nucleoside phosphorylase DeoD-type (236 aa).

Residue H5 coordinates a purine D-ribonucleoside. Residues G21, R25, R44, and 88–91 each bind phosphate; that span reads RIGS. A purine D-ribonucleoside contacts are provided by residues 180-182 and 204-205; these read EME and SD. D205 (proton donor) is an active-site residue.

Belongs to the PNP/UDP phosphorylase family. As to quaternary structure, homohexamer; trimer of homodimers.

The enzyme catalyses a purine D-ribonucleoside + phosphate = a purine nucleobase + alpha-D-ribose 1-phosphate. The catalysed reaction is a purine 2'-deoxy-D-ribonucleoside + phosphate = a purine nucleobase + 2-deoxy-alpha-D-ribose 1-phosphate. Its function is as follows. Catalyzes the reversible phosphorolytic breakdown of the N-glycosidic bond in the beta-(deoxy)ribonucleoside molecules, with the formation of the corresponding free purine bases and pentose-1-phosphate. This Tolumonas auensis (strain DSM 9187 / NBRC 110442 / TA 4) protein is Purine nucleoside phosphorylase DeoD-type.